A 130-amino-acid chain; its full sequence is Small ribosomal subunit protein uS11 (130 aa).

The protein belongs to the universal ribosomal protein uS11 family. In terms of assembly, part of the 30S ribosomal subunit. Interacts with proteins S7 and S18. Binds to IF-3.

Functionally, located on the platform of the 30S subunit, it bridges several disparate RNA helices of the 16S rRNA. Forms part of the Shine-Dalgarno cleft in the 70S ribosome. The protein is Small ribosomal subunit protein uS11 of Prochlorococcus marinus subsp. pastoris (strain CCMP1986 / NIES-2087 / MED4).